The sequence spans 211 residues: Probable GTP-binding protein EngB (211 aa).

Positions 26–200 (SGIEIAFAGR…RQKLDDWFAA (175 aa)) constitute an EngB-type G domain. Residues 34–41 (GRSNAGKS), 61–65 (GRTRL), 79–82 (DLPG), 146–149 (TKAD), and 179–181 (FSS) contribute to the GTP site. Positions 41 and 63 each coordinate Mg(2+).

Belongs to the TRAFAC class TrmE-Era-EngA-EngB-Septin-like GTPase superfamily. EngB GTPase family. The cofactor is Mg(2+).

Its function is as follows. Necessary for normal cell division and for the maintenance of normal septation. The sequence is that of Probable GTP-binding protein EngB from Sodalis glossinidius (strain morsitans).